Here is a 225-residue protein sequence, read N- to C-terminus: Membrane protein (225 aa).

The Virion surface portion of the chain corresponds to 1-20 (MSNETNCTLDFEQSVELFKE). The helical transmembrane segment at 21–41 (YNLFITAFLLFLTIILQYGYA) threads the bilayer. Over 42–51 (TRSKFIYILK) the chain is Intravirion. Residues 52–72 (MIVLWCFWPLNIAVGVISCIY) form a helical membrane-spanning segment. Residues 73–77 (PPNTG) are Virion surface-facing. The helical transmembrane segment at 78–98 (GLVAAIILTVFACLSFVGYWI) threads the bilayer. Residues 99 to 225 (QSIRLFKRCR…VATGGSSLYT (127 aa)) lie on the Intravirion side of the membrane.

It belongs to the gammacoronaviruses M protein family. As to quaternary structure, homomultimer. Interacts with envelope E protein in the budding compartment of the host cell, which is located between endoplasmic reticulum and the Golgi complex. Forms a complex with HE and S proteins. Interacts with nucleocapsid N protein. This interaction probably participates in RNA packaging into the virus.

It is found in the virion membrane. It localises to the host Golgi apparatus membrane. Its function is as follows. Component of the viral envelope that plays a central role in virus morphogenesis and assembly via its interactions with other viral proteins. The sequence is that of Membrane protein from Gallus gallus (Chicken).